The sequence spans 23 residues: Benzaldehyde dehydrogenase [NAD(+)] I (23 aa).

Belongs to the aldehyde dehydrogenase family. In terms of assembly, homotetramer.

The enzyme catalyses benzaldehyde + NAD(+) + H2O = benzoate + NADH + 2 H(+). The chain is Benzaldehyde dehydrogenase [NAD(+)] I from Acinetobacter guillouiae (Acinetobacter genomosp. 11).